The primary structure comprises 418 residues: LL-diaminopimelate aminotransferase (418 aa).

Substrate-binding residues include Tyr-25 and Gly-52. Residues Tyr-78, 115-116, Tyr-140, Asn-190, Tyr-221, and 248-250 contribute to the pyridoxal 5'-phosphate site; these read SK and SFS. The substrate site is built by Lys-116, Tyr-140, and Asn-190. Residue Lys-251 is modified to N6-(pyridoxal phosphate)lysine. Arg-259 is a binding site for pyridoxal 5'-phosphate.

The protein belongs to the class-I pyridoxal-phosphate-dependent aminotransferase family. As to quaternary structure, homodimer. Pyridoxal 5'-phosphate is required as a cofactor.

It is found in the cytoplasm. It catalyses the reaction (2S,6S)-2,6-diaminopimelate + 2-oxoglutarate = (S)-2,3,4,5-tetrahydrodipicolinate + L-glutamate + H2O + H(+). Its pathway is amino-acid biosynthesis; L-lysine biosynthesis via DAP pathway; LL-2,6-diaminopimelate from (S)-tetrahydrodipicolinate (aminotransferase route): step 1/1. In terms of biological role, involved in the synthesis of meso-diaminopimelate (m-DAP or DL-DAP), required for both lysine and peptidoglycan biosynthesis. Catalyzes the direct conversion of tetrahydrodipicolinate to LL-diaminopimelate, a reaction that requires three enzymes in E.coli. The sequence is that of LL-diaminopimelate aminotransferase (dapL) from Methanocaldococcus jannaschii (strain ATCC 43067 / DSM 2661 / JAL-1 / JCM 10045 / NBRC 100440) (Methanococcus jannaschii).